Consider the following 79-residue polypeptide: Exodeoxyribonuclease 7 small subunit (79 aa).

Belongs to the XseB family. In terms of assembly, heterooligomer composed of large and small subunits.

It localises to the cytoplasm. The catalysed reaction is Exonucleolytic cleavage in either 5'- to 3'- or 3'- to 5'-direction to yield nucleoside 5'-phosphates.. Its function is as follows. Bidirectionally degrades single-stranded DNA into large acid-insoluble oligonucleotides, which are then degraded further into small acid-soluble oligonucleotides. The polypeptide is Exodeoxyribonuclease 7 small subunit (Lactococcus lactis subsp. lactis (strain IL1403) (Streptococcus lactis)).